A 374-amino-acid polypeptide reads, in one-letter code: Patatin-2-Kuras 1 (374 aa).

Residues 1–11 (MILATTGSTCA) form the signal peptide. A PNPLA domain is found at 20 to 217 (LSIDGGGIKG…TVGDPALLSL (198 aa)). A GXGXXG motif is present at residues 24-29 (GGGIKG). The short motif at 63-67 (GTSTG) is the GXSXG element. Ser-65 functions as the Nucleophile in the catalytic mechanism. Residue Asn-103 is glycosylated (N-linked (GlcNAc...) asparagine). Asp-203 serves as the catalytic Proton acceptor. Residues 203 to 205 (DGA) carry the DGA/G motif. The stretch at 309–372 (ENALTGTTTE…DRKKLRANKA (64 aa)) forms a coiled coil.

Belongs to the patatin family. In terms of tissue distribution, tuber.

It localises to the vacuole. Functionally, probable lipolytic acyl hydrolase (LAH), an activity which is thought to be involved in the response of tubers to pathogens. In Solanum tuberosum (Potato), this protein is Patatin-2-Kuras 1 (pat2-k1).